A 178-amino-acid chain; its full sequence is Peptide methionine sulfoxide reductase MsrA (178 aa).

Residue cysteine 12 is part of the active site.

This sequence belongs to the MsrA Met sulfoxide reductase family.

The enzyme catalyses L-methionyl-[protein] + [thioredoxin]-disulfide + H2O = L-methionyl-(S)-S-oxide-[protein] + [thioredoxin]-dithiol. The catalysed reaction is [thioredoxin]-disulfide + L-methionine + H2O = L-methionine (S)-S-oxide + [thioredoxin]-dithiol. Has an important function as a repair enzyme for proteins that have been inactivated by oxidation. Catalyzes the reversible oxidation-reduction of methionine sulfoxide in proteins to methionine. The sequence is that of Peptide methionine sulfoxide reductase MsrA from Erwinia tasmaniensis (strain DSM 17950 / CFBP 7177 / CIP 109463 / NCPPB 4357 / Et1/99).